We begin with the raw amino-acid sequence, 273 residues long: MSDTLTNTGRYQATFAKLKAEGRGAFVPFVTLGDPSPELSLKIIDTLVQNGADALELGFPFSDPLADGPVIQGANLRSLAAGTTPTACFELLAQVRAKYPELPIGLLLYANLVFANGIDAFYAKAQQAGVDSVLIADVPVEESAPFSEAAKAHGIAPIFIAPPNADSETLALVSASGEGYTYLLSRAGVTGTDTKAGVPVEEILSKLKTFNAPPPLLGFGIAEPAQVSAAIKAGAAGAISGSAVVKIIETHQHDEAKLLATLGDFTRAMKAAT.

Residues glutamate 56 and aspartate 67 each act as proton acceptor in the active site.

The protein belongs to the TrpA family. As to quaternary structure, tetramer of two alpha and two beta chains.

The catalysed reaction is (1S,2R)-1-C-(indol-3-yl)glycerol 3-phosphate + L-serine = D-glyceraldehyde 3-phosphate + L-tryptophan + H2O. Its pathway is amino-acid biosynthesis; L-tryptophan biosynthesis; L-tryptophan from chorismate: step 5/5. The alpha subunit is responsible for the aldol cleavage of indoleglycerol phosphate to indole and glyceraldehyde 3-phosphate. The chain is Tryptophan synthase alpha chain from Shewanella baltica (strain OS155 / ATCC BAA-1091).